The primary structure comprises 433 residues: Glutamate-1-semialdehyde 2,1-aminomutase (433 aa).

Lys-272 carries the post-translational modification N6-(pyridoxal phosphate)lysine.

Belongs to the class-III pyridoxal-phosphate-dependent aminotransferase family. HemL subfamily. Homodimer. Pyridoxal 5'-phosphate is required as a cofactor.

It is found in the cytoplasm. The catalysed reaction is (S)-4-amino-5-oxopentanoate = 5-aminolevulinate. The protein operates within porphyrin-containing compound metabolism; protoporphyrin-IX biosynthesis; 5-aminolevulinate from L-glutamyl-tRNA(Glu): step 2/2. The polypeptide is Glutamate-1-semialdehyde 2,1-aminomutase (Magnetococcus marinus (strain ATCC BAA-1437 / JCM 17883 / MC-1)).